The primary structure comprises 788 residues: Putative wall-associated receptor kinase-like 11 (788 aa).

The N-terminal stretch at M1–S27 is a signal peptide. Topologically, residues L28–R375 are extracellular. N65, N80, N121, N159, N233, N253, N278, N295, and N310 each carry an N-linked (GlcNAc...) asparagine glycan. Residues C306–C369 form an atypical EGF-like region. 3 disulfides stabilise this stretch: C308–C321, C343–C360, and C354–C369. Residue N372 is glycosylated (N-linked (GlcNAc...) asparagine). Residues V376–W396 traverse the membrane as a helical segment. The Cytoplasmic portion of the chain corresponds to L397–I788. One can recognise a Protein kinase domain in the interval F451–L726. ATP-binding positions include L457–V465 and K479. The residue at position 524 (Y524) is a Phosphotyrosine. Residue D576 is the Proton acceptor of the active site. 2 positions are modified to phosphothreonine: T610 and T615. Residue Y623 is modified to Phosphotyrosine.

It belongs to the protein kinase superfamily. Ser/Thr protein kinase family.

It is found in the membrane. The catalysed reaction is L-seryl-[protein] + ATP = O-phospho-L-seryl-[protein] + ADP + H(+). It catalyses the reaction L-threonyl-[protein] + ATP = O-phospho-L-threonyl-[protein] + ADP + H(+). Its function is as follows. Putative serine/threonine-protein kinase that may function as a signaling receptor of extracellular matrix component. The sequence is that of Putative wall-associated receptor kinase-like 11 (WAKL11) from Arabidopsis thaliana (Mouse-ear cress).